We begin with the raw amino-acid sequence, 223 residues long: DNA-directed RNA polymerase III subunit RPC7 (223 aa).

A compositionally biased stretch (basic and acidic residues) spans 111 to 124 (MMPRKKCKKGDPKS). A disordered region spans residues 111–223 (MMPRKKCKKG…SDDNMDEATY (113 aa)). Position 134 is a phosphothreonine (Thr134). The span at 144-156 (KTIEELEKRGEGE) shows a compositional bias: basic and acidic residues. Phosphoserine is present on Ser158. 2 stretches are compositionally biased toward acidic residues: residues 173–198 (KDDEEDGEEDAEQEDYDEEEQEEEND) and 206–223 (NGDDFGVDSDDNMDEATY).

This sequence belongs to the eukaryotic RPC7 RNA polymerase subunit family. In terms of assembly, component of the RNA polymerase III complex consisting of 17 subunits: a ten-subunit horseshoe-shaped catalytic core composed of POLR3A/RPC1, POLR3B/RPC2, POLR1C/RPAC1, POLR1D/RPAC2, POLR3K/RPC10, POLR2E/RPABC1, POLR2F/RPABC2, POLR2H/RPABC3, POLR2K/RPABC4 and POLR2L/RPABC5; a mobile stalk composed of two subunits POLR3H/RPC8 and CRCP/RPC9, protruding from the core and functioning primarily in transcription initiation; and additional subunits homologous to general transcription factors of the RNA polymerase II machinery, POLR3C/RPC3-POLR3F/RPC6-POLR3G/RPC7 heterotrimer required for transcription initiation and POLR3D/RPC4-POLR3E/RPC5 heterodimer involved in both transcription initiation and termination. Directly interacts with POLR3C/RPC62. Also found in a trimeric complex with POLR3C/RPC3 and POLR3GL. In terms of tissue distribution, expressed at low levels in the liver.

It localises to the nucleus. The protein localises to the cytoplasm. Functionally, DNA-dependent RNA polymerase catalyzes the transcription of DNA into RNA using the four ribonucleoside triphosphates as substrates. Specific peripheric component of RNA polymerase III (Pol III) which synthesizes small non-coding RNAs including 5S rRNA, snRNAs, tRNAs and miRNAs from at least 500 distinct genomic loci. Acts as a long tether that bridges POLR3C/RPC3-POLR3F/RPC6-POLR3G/RPC7 heterotrimer and the mobile stalk of Pol III, coordinating the dynamics of Pol III stalk and clamp modules during the transition from apo to elongation state. Pol III exists as two alternative complexes defined by the mutually exclusive incorporation of subunit POLR3G/RPC7alpha or POLR3GL/RPC7beta. POLR3G/RPC7alpha modulates Pol III transcriptome by specifically enhancing the transcription of snaR-A non-coding RNAs. At resting state, occupies the active site of apo Pol III and keeps Pol III in an autoinhibitory mode, preventing non-specific transcription. Pol III plays a key role in sensing and limiting infection by intracellular bacteria and DNA viruses. Acts as a nuclear and cytosolic DNA sensor involved in innate immune response. Can sense non-self dsDNA that serves as template for transcription into dsRNA. The non-self RNA polymerase III transcripts, such as Epstein-Barr virus-encoded RNAs (EBERs), induce type I interferon and NF-kappa-B through the RIG-I pathway. In Mus musculus (Mouse), this protein is DNA-directed RNA polymerase III subunit RPC7 (Polr3g).